The primary structure comprises 104 residues: MAGRAKKKCPWNDSCKTTIKIWPDVRMMLGGWLIACASNKPDPKTWCSSPPSAVLKLPILISSPAASSHPRKRGKEKKERTPTERLAAPARKKQCSAYLAIATG.

The interval 62-92 (SSPAASSHPRKRGKEKKERTPTERLAAPARK) is disordered.

This is an uncharacterized protein from Human adenovirus B serotype 7 (HAdV-7).